Consider the following 681-residue polypeptide: DNA-directed RNA polymerase subunit beta' (681 aa).

Zn(2+)-binding residues include Cys69, Cys71, Cys87, and Cys90. Mg(2+) contacts are provided by Asp490, Asp492, and Asp494.

Belongs to the RNA polymerase beta' chain family. RpoC1 subfamily. In plastids the minimal PEP RNA polymerase catalytic core is composed of four subunits: alpha, beta, beta', and beta''. When a (nuclear-encoded) sigma factor is associated with the core the holoenzyme is formed, which can initiate transcription. Mg(2+) is required as a cofactor. Requires Zn(2+) as cofactor.

The protein resides in the plastid. It localises to the chloroplast. It carries out the reaction RNA(n) + a ribonucleoside 5'-triphosphate = RNA(n+1) + diphosphate. DNA-dependent RNA polymerase catalyzes the transcription of DNA into RNA using the four ribonucleoside triphosphates as substrates. The chain is DNA-directed RNA polymerase subunit beta' from Liriodendron tulipifera (Tuliptree).